The sequence spans 114 residues: UPF0060 membrane protein GDI3492/Gdia_2889 (114 aa).

Transmembrane regions (helical) follow at residues 8-28 (FAVY…WWCW), 35-55 (AWVL…LTLV), 64-84 (FAAY…LVEG), and 92-112 (AAGV…GRGA).

It belongs to the UPF0060 family.

It is found in the cell inner membrane. The chain is UPF0060 membrane protein GDI3492/Gdia_2889 from Gluconacetobacter diazotrophicus (strain ATCC 49037 / DSM 5601 / CCUG 37298 / CIP 103539 / LMG 7603 / PAl5).